Here is a 240-residue protein sequence, read N- to C-terminus: Methylthioribulose-1-phosphate dehydratase (240 aa).

Cysteine 99 is a substrate binding site. Histidine 116 and histidine 118 together coordinate Zn(2+). Glutamate 145 functions as the Proton donor/acceptor in the catalytic mechanism. Histidine 201 contacts Zn(2+).

This sequence belongs to the aldolase class II family. MtnB subfamily. Zn(2+) is required as a cofactor.

Its subcellular location is the cytoplasm. It catalyses the reaction 5-(methylsulfanyl)-D-ribulose 1-phosphate = 5-methylsulfanyl-2,3-dioxopentyl phosphate + H2O. Its pathway is amino-acid biosynthesis; L-methionine biosynthesis via salvage pathway; L-methionine from S-methyl-5-thio-alpha-D-ribose 1-phosphate: step 2/6. Catalyzes the dehydration of methylthioribulose-1-phosphate (MTRu-1-P) into 2,3-diketo-5-methylthiopentyl-1-phosphate (DK-MTP-1-P). The polypeptide is Methylthioribulose-1-phosphate dehydratase (Ajellomyces capsulatus (strain G186AR / H82 / ATCC MYA-2454 / RMSCC 2432) (Darling's disease fungus)).